The primary structure comprises 138 residues: Large ribosomal subunit protein uL16 (138 aa).

Basic residues predominate over residues 1–15 (MLSPKKVKYRKKQRG). A disordered region spans residues 1-21 (MLSPKKVKYRKKQRGRLSGEA).

The protein belongs to the universal ribosomal protein uL16 family. Part of the 50S ribosomal subunit.

Functionally, binds 23S rRNA and is also seen to make contacts with the A and possibly P site tRNAs. The sequence is that of Large ribosomal subunit protein uL16 from Borrelia garinii subsp. bavariensis (strain ATCC BAA-2496 / DSM 23469 / PBi) (Borreliella bavariensis).